Reading from the N-terminus, the 156-residue chain is LIM domain only protein 3 (156 aa).

2 consecutive LIM zinc-binding domains span residues 22–84 (KGCA…LFGV) and 86–148 (GNCA…GLMK).

This chain is LIM domain only protein 3, found in Xenopus laevis (African clawed frog).